The sequence spans 192 residues: MKQVEIIGYSRANLGKKGSKDLRLDSNVPCVLYGGESQLHFHVPMFLFRDIIYTGVACTVLLNLEGKQYKCVVQEVQFHPINEMLLHVDFLLLDDKKQVKMNIPVKFEGTSPGVIKGGKLVQKVATLQVKAFPKDLPDVILADISQLELAKSVKVGDIKTNNYTILNAKSIPVCTVTIPRSLKQEEAAAAKK.

It belongs to the bacterial ribosomal protein bL25 family. CTC subfamily. In terms of assembly, part of the 50S ribosomal subunit; part of the 5S rRNA/L5/L18/L25 subcomplex. Contacts the 5S rRNA. Binds to the 5S rRNA independently of L5 and L18.

Its function is as follows. This is one of the proteins that binds to the 5S RNA in the ribosome where it forms part of the central protuberance. This is Large ribosomal subunit protein bL25 from Cytophaga hutchinsonii (strain ATCC 33406 / DSM 1761 / CIP 103989 / NBRC 15051 / NCIMB 9469 / D465).